We begin with the raw amino-acid sequence, 218 residues long: Stromal cell-derived factor 2-like protein (218 aa).

The N-terminal stretch at 1-21 is a signal peptide; it reads MALGFFCLAIFLYLSLDPDSG. MIR domains lie at 34–88, 96–151, and 154–208; these read GVEI…VKPV, GDAV…LIIE, and GKTW…AAEG. Residue N214 is glycosylated (N-linked (GlcNAc...) asparagine).

In terms of assembly, interacts with ERDJ3B.

It is found in the endoplasmic reticulum. Involved in the endoplasmic reticulum (ER) protein quality control and unfolded protein response. May be involved in the quality control of glycoproteins. Forms a complex in the ER with ERDJ3B and MED37A/BIP1 which is required for the proper accumulation and function of the surface-exposed leucine-rich repeat receptor kinases EFR involved in pathogen-associated molecular pattern (PAMP) triggered immunity. The polypeptide is Stromal cell-derived factor 2-like protein (SDF2) (Arabidopsis thaliana (Mouse-ear cress)).